A 715-amino-acid chain; its full sequence is Polyribonucleotide nucleotidyltransferase (715 aa).

Mg(2+) is bound by residues aspartate 490 and aspartate 496. Residues 557 to 616 (PRIETMTIPTDKIREVIGSGGKVIREIVETSGAKVDISDDGTIKIASANADSIKKAYDMI) form the KH domain. An S1 motif domain is found at 626 to 694 (GKIYVGKVVK…DRGKVRLGMK (69 aa)).

Belongs to the polyribonucleotide nucleotidyltransferase family. It depends on Mg(2+) as a cofactor.

It is found in the cytoplasm. It carries out the reaction RNA(n+1) + phosphate = RNA(n) + a ribonucleoside 5'-diphosphate. Its function is as follows. Involved in mRNA degradation. Catalyzes the phosphorolysis of single-stranded polyribonucleotides processively in the 3'- to 5'-direction. The sequence is that of Polyribonucleotide nucleotidyltransferase from Paracoccus denitrificans (strain Pd 1222).